Reading from the N-terminus, the 284-residue chain is Orotidine 5'-phosphate decarboxylase (284 aa).

Substrate-binding positions include Asp-42, Lys-64–His-66, Asp-96–Thr-105, Tyr-237, and Arg-255. Lys-98 serves as the catalytic Proton donor.

This sequence belongs to the OMP decarboxylase family.

It catalyses the reaction orotidine 5'-phosphate + H(+) = UMP + CO2. It participates in pyrimidine metabolism; UMP biosynthesis via de novo pathway; UMP from orotate: step 2/2. The polypeptide is Orotidine 5'-phosphate decarboxylase (URA3) (Magnusiomyces magnusii (Yeast)).